The sequence spans 915 residues: MTSLHKQIIESHNNDITKLKSSMSTRAAARRSVCLSSMSYTLGADDVTPITSNTTPSNNNNNNNTTTTITTTTTTPTISPLKQSTTGSIIPKSILVTKSGSKEEPIVSSSKSSSNSSSINNNFNNLYSASTFSSSTKKVHERPSINPGFRKPREALLSGNSDSGIIKKPSSSSTSSSSSSSSTTSNIKAPIQISHSSNSGSSSSGGNNNNSDDNSGSSTIKHTAASLSKMKLSPSHTISDSPRSSTMKSRSVSISNGSLFSPTNTSVNNSNNNTSSNIKTPTKSSISENLDQNTPPPPSSSSTTKTPTATTTTTTTTTSSSSSTSTNTTPSKSSVDDVFARLANVSKPAIKSRSLSVSASLARVEQSPPTKDKGDKESSSSSSSSSSSFSSKFTKILRSSSKTPTPTSSNTTVQPSTTSLSASKISSRKDTKSLSSFSTTTTTTTLKSSSSSSSSSSSSSKSNIASSSSSSSNNLTNLLTQSQSISSTSTSTTTTPTSTSPTLASSMSVLSSPTSTTTTSTSTTSTTTTPTKSSCTIITPSIALKLYINDLTSAEQSEILDYPQIYFTGNTNKKTKFNSQLPNNGYDNDIGEYKVVERDHIAYRFEIVSILGQGSFCQVVKGYDYKTGEMVALKILRNQKRFHNQALTEIKILEYLKTNDPNSTASIVHLNNYFYFRNHLILTFELLSMNLYDFLKVNHFQGYNLNLVRRFGAQILTSLRFLSKRNIIHADLKPENILLKSPTKSGIKLIDFGSSCFENEQIFTYIQSRFYRSPEVILGTKYDKSIDIWSLGCILVEIFTGVPLFPGSDEPEQLACIMEVLGAPPKSVIDNSTRKDIFFEDDGTPKPVKNSTTGELYTIGTKSFKDSIRSGDEDFDNFILDCLKWEPSQRITAEQGLKHDWIIKVIAPTAPSTPS.

4 stretches are compositionally biased toward low complexity: residues 51–79, 108–119, 170–185, and 196–218; these read TSNT…PTIS, SSSKSSSNSSSI, SSSS…STTS, and SSNS…SGSS. 3 disordered regions span residues 51–119, 132–334, and 349–533; these read TSNT…SSSI, FSSS…SKSS, and AIKS…PTKS. Over residues 234 to 260 the composition is skewed to polar residues; it reads PSHTISDSPRSSTMKSRSVSISNGSLF. 6 stretches are compositionally biased toward low complexity: residues 261-287, 300-333, 352-364, 379-391, 399-425, and 433-533; these read SPTN…SSIS, SSST…PSKS, SRSL…LARV, SSSS…SFSS, SSSK…ASKI, and SLSS…PTKS. Residues 605–902 form the Protein kinase domain; it reads FEIVSILGQG…AEQGLKHDWI (298 aa). ATP is bound by residues 611–619 and lysine 634; that span reads LGQGSFCQV. Aspartate 731 functions as the Proton acceptor in the catalytic mechanism.

Belongs to the protein kinase superfamily. CMGC Ser/Thr protein kinase family. MNB/DYRK subfamily.

The enzyme catalyses L-seryl-[protein] + ATP = O-phospho-L-seryl-[protein] + ADP + H(+). It catalyses the reaction L-threonyl-[protein] + ATP = O-phospho-L-threonyl-[protein] + ADP + H(+). The catalysed reaction is L-tyrosyl-[protein] + ATP = O-phospho-L-tyrosyl-[protein] + ADP + H(+). The polypeptide is Probable serine/threonine-protein kinase dyrk2 (dyrk2) (Dictyostelium discoideum (Social amoeba)).